A 166-amino-acid chain; its full sequence is MSPKKAKKRAEGANYNVFSMFEQTQIQEFKEAFTIMDQNRDGFIDKNDLRDTFAALGRVNVKNEEIDEMLKEAPGPINFTVFLQMFGEKLKGADPEETILNAFKVFDPEGKGVLKADYIKEMLTTQAERFSKEEIDQMFAAFPPDVTGNLDYKNLVHIITHGEEKD.

S2 is modified (n,N,N-trimethylserine). The residue at position 14 (N14) is a Deamidated asparagine. Residue S19 is modified to Phosphoserine. 3 consecutive EF-hand domains span residues 24–59, 94–129, and 130–165; these read TQIQEFKEAFTIMDQNRDGFIDKNDLRDTFAALGRV, DPEETILNAFKVFDPEGKGVLKADYIKEMLTTQAER, and FSKEEIDQMFAAFPPDVTGNLDYKNLVHIITHGEEK. Positions 37, 39, 41, and 48 each coordinate Ca(2+). Residue T52 is modified to Phosphothreonine.

Myosin is a hexamer of 2 heavy chains and 4 light chains. Interacts with MYOC. N-terminus is methylated by METTL11A/NTM1. In terms of processing, phosphorylated by MYLK3 and MYLK2; promotes cardiac muscle contraction and function. Dephosphorylated by PPP1CB complexed to PPP1R12B. The phosphorylated form in adult is expressed as gradients across the heart from endocardium (low phosphorylation) to epicardium (high phosphorylation); regulates cardiac torsion and workload distribution.

It localises to the cytoplasm. Its subcellular location is the myofibril. The protein localises to the sarcomere. The protein resides in the a band. In terms of biological role, contractile protein that plays a role in heart development and function. Following phosphorylation, plays a role in cross-bridge cycling kinetics and cardiac muscle contraction by increasing myosin lever arm stiffness and promoting myosin head diffusion; as a consequence of the increase in maximum contraction force and calcium sensitivity of contraction force. These events altogether slow down myosin kinetics and prolong duty cycle resulting in accumulated myosins being cooperatively recruited to actin binding sites to sustain thin filament activation as a means to fine-tune myofilament calcium sensitivity to force. During cardiogenesis plays an early role in cardiac contractility by promoting cardiac myofibril assembly. In Bos taurus (Bovine), this protein is Myosin regulatory light chain 2, ventricular/cardiac muscle isoform.